The primary structure comprises 991 residues: Phosphate metabolism protein 7 (991 aa).

At 1-9 (MADSSSTSA) the chain is on the extracellular side. Residues 10–30 (FISTLIIYGLTAVVFVWLFLL) traverse the membrane as a helical segment. The Cytoplasmic segment spans residues 31 to 91 (LRPKNRRVYE…TSVDGYFLLR (61 aa)). A helical membrane pass occupies residues 92-112 (YIGIVGSLSFVGCLLLLPILL). Residues 113-138 (PVNATNGNNLQGFELLSFSNVTNKNR) are Extracellular-facing. N115 and N132 each carry an N-linked (GlcNAc...) asparagine glycan. A helical membrane pass occupies residues 139–159 (FYAHVFLSWIFFGLFTYVIYK). Topologically, residues 160–388 (ELYYYVVFRH…ERHSRRAVAN (229 aa)) are cytoplasmic. Residues 389–409 (TIMVLLIIFWAFPVAVVGIIS) form a helical membrane-spanning segment. The Extracellular segment spans residues 410–437 (NVNFLTDKVPFLRFINNMPTFLMGVITG). The helical transmembrane segment at 438 to 458 (LLPTIALVVLMSLVPPFIVML) threads the bilayer. Residues 459 to 471 (GKLSGCVTRQETD) are Cytoplasmic-facing. The chain crosses the membrane as a helical span at residues 472–492 (LYSQAWYYAFAVIQIFLVVTA). The Extracellular segment spans residues 493 to 523 (TSSASSTVDSIIDRPRSAMTLLANNLPKASN). The helical transmembrane segment at 524 to 544 (FYIMYFILKGLTGPTWTILQA) threads the bilayer. The Cytoplasmic portion of the chain corresponds to 545–582 (VNLLLSKVLGRVLDSTPRQKWNRYNTLATPRMGIVYPG). Residues 583 to 603 (IEILVCIYICYSIIAPILLFF) traverse the membrane as a helical segment. Residue S604 is a topological domain, extracellular. Residues 605–625 (TVMLTLLYVAYLYNLNYVFGF) traverse the membrane as a helical segment. Over 626 to 637 (SFDLKGRNYPRA) the chain is Cytoplasmic. Residues 638-658 (LFQIFVGIYLSEVCLLGLFIM) form a helical membrane-spanning segment. Residues 659-661 (AKT) are Extracellular-facing. The chain crosses the membrane as a helical span at residues 662-682 (WGPLVLEVFWIVVTALAHIYM). The Cytoplasmic segment spans residues 683–991 (KRKFIPLFDA…PPDYEPEAKK (309 aa)). The interval 749-787 (KANLIPDNDGSSENGTPSNPFESGSERASLSGSNAESDS) is disordered. A compositionally biased stretch (polar residues) spans 757-785 (DGSSENGTPSNPFESGSERASLSGSNAES).

This sequence belongs to the CSC1 (TC 1.A.17) family.

It is found in the cell membrane. Its function is as follows. Acts as an osmosensitive calcium-permeable cation channel. In Saccharomyces cerevisiae (strain ATCC 204508 / S288c) (Baker's yeast), this protein is Phosphate metabolism protein 7 (PHM7).